The sequence spans 411 residues: Na(+)-translocating NADH-quinone reductase subunit F (411 aa).

The helical transmembrane segment at 5-25 (VILALGIAAFTVIVLVLVAII) threads the bilayer. A 2Fe-2S ferredoxin-type domain is found at 36-130 (GDITIDINDD…NMEVELPEEI (95 aa)). [2Fe-2S] cluster is bound by residues Cys-73, Cys-79, Cys-82, and Cys-114. Residues 133-273 (VKKWECTVIS…SGPFGEFFAK (141 aa)) form the FAD-binding FR-type domain. Residues 276–393 (DAEMVFIGGG…PVMNAAVIKM (118 aa)) are catalytic.

Belongs to the NqrF family. As to quaternary structure, composed of six subunits; NqrA, NqrB, NqrC, NqrD, NqrE and NqrF. Requires [2Fe-2S] cluster as cofactor. FAD is required as a cofactor.

The protein resides in the cell inner membrane. The catalysed reaction is a ubiquinone + n Na(+)(in) + NADH + H(+) = a ubiquinol + n Na(+)(out) + NAD(+). Functionally, NQR complex catalyzes the reduction of ubiquinone-1 to ubiquinol by two successive reactions, coupled with the transport of Na(+) ions from the cytoplasm to the periplasm. The first step is catalyzed by NqrF, which accepts electrons from NADH and reduces ubiquinone-1 to ubisemiquinone by a one-electron transfer pathway. In Haemophilus influenzae (strain ATCC 51907 / DSM 11121 / KW20 / Rd), this protein is Na(+)-translocating NADH-quinone reductase subunit F.